The sequence spans 94 residues: Small ribosomal subunit protein eS24 (94 aa).

It belongs to the eukaryotic ribosomal protein eS24 family.

This chain is Small ribosomal subunit protein eS24, found in Nanoarchaeum equitans (strain Kin4-M).